Here is a 237-residue protein sequence, read N- to C-terminus: Sulfolipid-1 exporter Sap (237 aa).

The next 6 helical transmembrane spans lie at 5 to 25 (VLVL…VVLM), 38 to 58 (FLCG…VVLG), 66 to 86 (FSVA…AFAL), 141 to 161 (VSGL…AAIL), 171 to 191 (ALAV…PLVS), and 217 to 237 (DAAL…LSNL).

This sequence belongs to the peptidoglycolipid addressing protein (GAP) (TC 2.A.116) family.

Its subcellular location is the cell inner membrane. Its function is as follows. Required for the transport across the inner membrane of sulfolipid-1 (SL-1), which is a major cell wall lipid of pathogenic mycobacteria. Could also transport SL1278 (2-palmitoyl-3-(C43)-phthioceranyl-alpha, alpha'-D-trehalose-2'-sulfate), which is the precursor of SL-1. May potentiate SL-1 levels and confer specificity for sulfolipids over structurally similar glycolipids. This chain is Sulfolipid-1 exporter Sap, found in Mycobacterium tuberculosis (strain ATCC 25618 / H37Rv).